Consider the following 559-residue polypeptide: BTB/POZ domain-containing protein At5g47800 (559 aa).

The BTB domain maps to asparagine 28–alanine 96. The 278-residue stretch at aspartate 199 to serine 476 folds into the NPH3 domain. The residue at position 417 (tyrosine 417) is a Phosphotyrosine. Positions glycine 477–glutamate 489 are enriched in low complexity. 2 disordered regions span residues glycine 477–histidine 502 and glutamate 524–arginine 559. 2 stretches are compositionally biased toward basic and acidic residues: residues threonine 492–histidine 502 and glutamate 524–lysine 541.

The protein belongs to the NPH3 family.

It functions in the pathway protein modification; protein ubiquitination. In terms of biological role, may act as a substrate-specific adapter of an E3 ubiquitin-protein ligase complex (CUL3-RBX1-BTB) which mediates the ubiquitination and subsequent proteasomal degradation of target proteins. The polypeptide is BTB/POZ domain-containing protein At5g47800 (Arabidopsis thaliana (Mouse-ear cress)).